We begin with the raw amino-acid sequence, 479 residues long: 5-hydroxytryptamine receptor 2B (479 aa).

The Extracellular portion of the chain corresponds to 1–55 (MASSYKMSEQSTISEHILQKTCDHLILTDRSGLKAESAAEEMKQTAENQGNTVHW). A helical transmembrane segment spans residues 56 to 78 (AALLIFAVIIPTIGGNILVILAV). Topologically, residues 79–89 (SLEKRLQYATN) are cytoplasmic. A helical transmembrane segment spans residues 90 to 112 (YFLMSLAVADLLVGLFVMPIALL). At 113 to 128 (TIMFEATWPLPLALCP) the chain is on the extracellular side. C127 and C206 are joined by a disulfide. Residues 129–150 (AWLFLDVLFSTASIMHLCAISL) form a helical membrane-spanning segment. D134 and T139 together coordinate ergotamine. The DRY motif; important for ligand-induced conformation changes motif lies at 151-153 (DRY). Over 151–170 (DRYIAIKKPIQANQCNSRTT) the chain is Cytoplasmic. The helical transmembrane segment at 171-191 (AFVKITVVWLISIGIAIPVPI) threads the bilayer. Over 192-215 (KGIEADVVNAHNITCELTKDRFGS) the chain is Extracellular. N203 carries N-linked (GlcNAc...) asparagine glycosylation. L208 contributes to the ergotamine binding site. A [DE]RFG motif; may stabilize a conformation that preferentially activates signaling via beta-arrestin family members motif is present at residues 211 to 214 (DRFG). The chain crosses the membrane as a helical span at residues 216–238 (FMLFGSLAAFFAPLTIMIVTYFL). Topologically, residues 239 to 323 (TIHALRKKAY…TISNEQRASK (85 aa)) are cytoplasmic. Residues 324–344 (VLGIVFLFFLLMWCPFFITNV) traverse the membrane as a helical segment. Residues 345 to 359 (TLALCDSCNQTTLKT) are Extracellular-facing. A disulfide bridge connects residues C349 and C352. A glycan (N-linked (GlcNAc...) asparagine) is linked at N353. The chain crosses the membrane as a helical span at residues 360-381 (LLQIFVWVGYVSSGVNPLIYTL). The NPxxY motif; important for ligand-induced conformation changes and signaling motif lies at 375 to 379 (NPLIY). The Cytoplasmic segment spans residues 382–479 (FNKTFREAFG…DKVEDQVSYI (98 aa)). Residue C396 is the site of S-palmitoyl cysteine attachment. Residues 477-479 (SYI) carry the PDZ-binding motif.

This sequence belongs to the G-protein coupled receptor 1 family. Interacts (via C-terminus) with MPDZ. Stomach fundus.

The protein resides in the cell membrane. It localises to the synapse. The protein localises to the synaptosome. Functionally, G-protein coupled receptor for 5-hydroxytryptamine (serotonin). Also functions as a receptor for various ergot alkaloid derivatives and psychoactive substances. Ligand binding causes a conformation change that triggers signaling via guanine nucleotide-binding proteins (G proteins) and modulates the activity of downstream effectors. HTR2B is coupled to G(q)/G(11) G alpha proteins and activates phospholipase C-beta, releasing diacylglycerol (DAG) and inositol 1,4,5-trisphosphate (IP3) second messengers that modulate the activity of phosphatidylinositol 3-kinase and promote the release of Ca(2+) ions from intracellular stores, respectively. Beta-arrestin family members inhibit signaling via G proteins and mediate activation of alternative signaling pathways. Plays a role in the regulation of dopamine and 5-hydroxytryptamine release, 5-hydroxytryptamine uptake and in the regulation of extracellular dopamine and 5-hydroxytryptamine levels, and thereby affects neural activity. May play a role in the perception of pain. Plays a role in the regulation of behavior, including impulsive behavior. Required for normal proliferation of embryonic cardiac myocytes and normal heart development. Protects cardiomyocytes against apoptosis. Plays a role in the adaptation of pulmonary arteries to chronic hypoxia. Plays a role in vasoconstriction. Required for normal osteoblast function and proliferation, and for maintaining normal bone density. Required for normal proliferation of the interstitial cells of Cajal in the intestine. The chain is 5-hydroxytryptamine receptor 2B (Htr2b) from Rattus norvegicus (Rat).